The following is a 317-amino-acid chain: Beta-ketoacyl-[acyl-carrier-protein] synthase III (317 aa).

Residues Cys112 and His244 contribute to the active site. The interval 245–249 (QANLR) is ACP-binding. Residue Asn274 is part of the active site.

It belongs to the thiolase-like superfamily. FabH family. In terms of assembly, homodimer.

The protein resides in the cytoplasm. It catalyses the reaction malonyl-[ACP] + acetyl-CoA + H(+) = 3-oxobutanoyl-[ACP] + CO2 + CoA. It participates in lipid metabolism; fatty acid biosynthesis. Its function is as follows. Catalyzes the condensation reaction of fatty acid synthesis by the addition to an acyl acceptor of two carbons from malonyl-ACP. Catalyzes the first condensation reaction which initiates fatty acid synthesis and may therefore play a role in governing the total rate of fatty acid production. Possesses both acetoacetyl-ACP synthase and acetyl transacylase activities. Its substrate specificity determines the biosynthesis of branched-chain and/or straight-chain of fatty acids. In Pasteurella multocida (strain Pm70), this protein is Beta-ketoacyl-[acyl-carrier-protein] synthase III.